Consider the following 1984-residue polypeptide: MAMLPPPGPQSFVHFTKQSLALIEQRISEEKAKEHKDEKKDDEEEGPKPSSDLEAGKQLPFIYGDIPPGMVSEPLEDLDPYYADKKTFIVLNKGKAIFRFNATPALYMLSPFSPLRRISIKILVHSLFSMLIMCTILTNCIFMTLSNPPEWTKNVEYTFTGIYTFESLIKILARGFCVGEFTFLRDPWNWLDFVVIVFAYLTEFVNLGNVSALRTFRVLRALKTISVIPGLKTIVGALIQSVKKLSDVMILTVFCLSVFALIGLQLFMGNLKHKCFRKELEENETLESIMNTAESEEELKKYFYYLEGSKDALLCGFSTDSGQCPEGYICVKAGRNPDYGYTSFDTFSWAFLALFRLMTQDYWENLYQQTLRAAGKTYMIFFVVVIFLGSFYLINLILAVVAMAYEEQNQANIEEAKQKELEFQQMLDRLKKEQEEAEAIAAAAAEFTSIGRSRIMGLSESSSETSRLSSKSAKERRNRRKKKKQKMSSGEEKGDDEKLSKSGSEESIRKKSFHLGVEGHHRTREKRLSTPNQSPLSIRGSLFSARRSSRTSLFSFKGRGRDLGSETEFADDEHSIFGDNESRRGSLFVPHRPRERRSSNISQASRSPPVLPVNGKMHSAVDCNGVVSLVDGPSALMLPNGQLLPEVIIDKATSDDSGTTNQMRKKRLSSSYFLSEDMLNDPHLRQRAMSRASILTNTVEELEESRQKCPPWWYRFAHTFLIWNCSPYWIKFKKLIYFIVMDPFVDLAITICIVLNTLFMAMEHHPMTEEFKNVLAVGNLIFTGIFAAEMVLKLIAMDPYEYFQVGWNIFDSLIVTLSLIELFLADVEGLSVLRSFRLLRVFKLAKSWPTLNMLIKIIGNSVGALGNLTLVLAIIVFIFAVVGMQLFGKSYKECVCKINVDCKLPRWHMNDFFHSFLIVFRVLCGEWIETMWDCMEVAGQTMCLIVYMMVMVIGNLVVLNLFLALLLSSFSSDNLTAIEEDTDANNLQIAVARIKRGINYVKQTLREFILKSFSKKPKGSKDTKRTADPNNKKENYISNRTLAEMSKDHNFLKEKDRISGYGSSLDKSFMDENDYQSFIHNPSLTVTVPIAPGESDLEIMNTEELSSDSDSDYSKEKRNRSSSSECSTVDNPLPGEEEAEAEPVNADEPEACFTDGCVRRFPCCQVNVDSGKGKVWWTIRKTCYRIVEHSWFESFIVLMILLSSGALAFEDIYIEKKKTIKIILEYADKIFTYIFILEMLLKWVAYGYKTYFTNAWCWLDFLIVDVSLVTLVANTLGYSDLGPIKSLRTLRALRPLRALSRFEGMRVVVNALIGAIPSIMNVLLVCLIFWLIFSIMGVNLFAGKFYECVNTTDGSRFPTSQVANRSECFALMNVSGNVRWKNLKVNFDNVGLGYLSLLQVATFKGWMDIMYAAVDSVNVNEQPKYEYSLYMYIYFVIFIIFGSFFTLNLFIGVIIDNFNQQKKKLGGQDIFMTEEQKKYYNAMKKLGSKKPQKPIPRPGNKFQGCIFDLVTNQAFDITIMVLICLNMVTMMVEKEGQTEYMDYVLHWINMVFIILFTGECVLKLISLRHYYFTVGWNIFDFVVVILSIVGMFLAEMIEKYFVSPTLFRVIRLARIGRILRLIKGAKGIRTLLFALMMSLPALFNIGLLLFLVMFIYAIFGMSNFAYVKKEAGINDMFNFETFGNSMICLFQITTSAGWDGLLAPILNSAPPDCDPKKVHPGSSVEGDCGNPSVGIFYFVSYIIISFLVVVNMYIAVILENFSVATEESTEPLSEDDFEMFYEVWEKFDPDATQFIEFCKLSDFAAALDPPLLIAKPNKVQLIAMDLPMVSGDRIHCLDILFAFTKRVLGEGGEMDSLRSQMEERFMSANPSKVSYEPITTTLKRKQEEVSATIIQRAYRRYRLRQHVKNISSIYIKDGDRDDDLPNKEDTVFDNVNENSSPEKTDVTASTISPPSYDSVTKPDQEKYETDKTEKEDKEKDESRK.

The Cytoplasmic portion of the chain corresponds to 1–125 (MAMLPPPGPQ…RRISIKILVH (125 aa)). The span at 26–39 (RISEEKAKEHKDEK) shows a compositional bias: basic and acidic residues. Positions 26 to 55 (RISEEKAKEHKDEKKDDEEEGPKPSSDLEA) are disordered. Residues 112 to 410 (FSPLRRISIK…VAMAYEEQNQ (299 aa)) form an I repeat. A helical transmembrane segment spans residues 126–145 (SLFSMLIMCTILTNCIFMTL). Topologically, residues 146–150 (SNPPE) are extracellular. The chain crosses the membrane as a helical span at residues 151-172 (WTKNVEYTFTGIYTFESLIKIL). The Cytoplasmic segment spans residues 173–185 (ARGFCVGEFTFLR). Residues 186–204 (DPWNWLDFVVIVFAYLTEF) form a helical membrane-spanning segment. The Extracellular segment spans residues 205-210 (VNLGNV). N-linked (GlcNAc...) asparagine glycosylation occurs at N209. The helical transmembrane segment at 211 to 227 (SALRTFRVLRALKTISV) threads the bilayer. Residues 228–241 (IPGLKTIVGALIQS) lie on the Cytoplasmic side of the membrane. A helical transmembrane segment spans residues 242 to 267 (VKKLSDVMILTVFCLSVFALIGLQLF). Topologically, residues 268–346 (MGNLKHKCFR…PDYGYTSFDT (79 aa)) are extracellular. Residues C275 and C324 are joined by a disulfide bond. An N-linked (GlcNAc...) asparagine glycan is attached at N283. The pore-forming intramembrane region spans 347 to 363 (FSWAFLALFRLMTQDYW). Over 364-376 (ENLYQQTLRAAGK) the chain is Extracellular. A helical transmembrane segment spans residues 377–402 (TYMIFFVVVIFLGSFYLINLILAVVA). Over 403 to 744 (MAYEEQNQAN…LIYFIVMDPF (342 aa)) the chain is Cytoplasmic. The segment covering 461 to 471 (SSSETSRLSSK) has biased composition (low complexity). Disordered stretches follow at residues 461 to 542 (SSSE…RGSL) and 576 to 609 (IFGDNESRRGSLFVPHRPRERRSSNISQASRSPP). Residues 474–486 (KERRNRRKKKKQK) are compositionally biased toward basic residues. Residues 489–509 (SGEEKGDDEKLSKSGSEESIR) are compositionally biased toward basic and acidic residues. One copy of the II repeat lies at 725–988 (CSPYWIKFKK…EEDTDANNLQ (264 aa)). Residues 745 to 761 (VDLAITICIVLNTLFMA) form a helical membrane-spanning segment. The Extracellular portion of the chain corresponds to 762 to 770 (MEHHPMTEE). The chain crosses the membrane as a helical span at residues 771-795 (FKNVLAVGNLIFTGIFAAEMVLKLI). Residues 796–804 (AMDPYEYFQ) lie on the Cytoplasmic side of the membrane. The helical transmembrane segment at 805-821 (VGWNIFDSLIVTLSLIE) threads the bilayer. Topologically, residues 822 to 830 (LFLADVEGL) are extracellular. Residues 831 to 847 (SVLRSFRLLRVFKLAKS) form a helical membrane-spanning segment. At 848–864 (WPTLNMLIKIIGNSVGA) the chain is on the cytoplasmic side. A helical transmembrane segment spans residues 865 to 887 (LGNLTLVLAIIVFIFAVVGMQLF). The Extracellular portion of the chain corresponds to 888–914 (GKSYKECVCKINVDCKLPRWHMNDFFH). A disulfide bridge links C896 with C902. The pore-forming intramembrane region spans 915 to 927 (SFLIVFRVLCGEW). The Extracellular segment spans residues 928–939 (IETMWDCMEVAG). The cysteines at positions 934 and 943 are disulfide-linked. Residues 940-966 (QTMCLIVYMMVMVIGNLVVLNLFLALL) traverse the membrane as a helical segment. At 967–1185 (LSSFSSDNLT…WWTIRKTCYR (219 aa)) the chain is on the cytoplasmic side. Disordered stretches follow at residues 1015-1040 (KKPKGSKDTKRTADPNNKKENYISNR) and 1103-1145 (EELS…EPVN). A compositionally biased stretch (basic and acidic residues) spans 1019–1035 (GSKDTKRTADPNNKKEN). The segment covering 1135-1145 (GEEEAEAEPVN) has biased composition (acidic residues). The III repeat unit spans residues 1178 to 1486 (TIRKTCYRIV…KKYYNAMKKL (309 aa)). A helical membrane pass occupies residues 1186 to 1210 (IVEHSWFESFIVLMILLSSGALAFE). Residues 1211–1222 (DIYIEKKKTIKI) lie on the Extracellular side of the membrane. The chain crosses the membrane as a helical span at residues 1223–1248 (ILEYADKIFTYIFILEMLLKWVAYGY). Residues 1249-1250 (KT) are Cytoplasmic-facing. A helical membrane pass occupies residues 1251 to 1276 (YFTNAWCWLDFLIVDVSLVTLVANTL). The Extracellular portion of the chain corresponds to 1277–1285 (GYSDLGPIK). Residues 1286–1302 (SLRTLRALRPLRALSRF) form a helical membrane-spanning segment. Over 1303-1315 (EGMRVVVNALIGA) the chain is Cytoplasmic. Residues 1316–1340 (IPSIMNVLLVCLIFWLIFSIMGVNL) traverse the membrane as a helical segment. The Extracellular segment spans residues 1341 to 1392 (FAGKFYECVNTTDGSRFPTSQVANRSECFALMNVSGNVRWKNLKVNFDNVGL). Cysteines 1348 and 1368 form a disulfide. N1350, N1364, and N1373 each carry an N-linked (GlcNAc...) asparagine glycan. An intramembrane region (pore-forming) is located at residues 1393 to 1403 (GYLSLLQVATF). Topologically, residues 1404–1429 (KGWMDIMYAAVDSVNVNEQPKYEYSL) are extracellular. A helical transmembrane segment spans residues 1430-1455 (YMYIYFVIFIIFGSFFTLNLFIGVII). Residues 1456-1512 (DNFNQQKKKLGGQDIFMTEEQKKYYNAMKKLGSKKPQKPIPRPGNKFQGCIFDLVTN) lie on the Cytoplasmic side of the membrane. S1488 carries the post-translational modification Phosphoserine; by PKC. Residues 1495-1793 (IPRPGNKFQG…WEKFDPDATQ (299 aa)) form an IV repeat. A helical membrane pass occupies residues 1513-1532 (QAFDITIMVLICLNMVTMMV). Residues 1533–1543 (EKEGQTEYMDY) are Extracellular-facing. A helical transmembrane segment spans residues 1544 to 1565 (VLHWINMVFIILFTGECVLKLI). Over 1566-1574 (SLRHYYFTV) the chain is Cytoplasmic. Residues 1575-1596 (GWNIFDFVVVILSIVGMFLAEM) traverse the membrane as a helical segment. The Extracellular portion of the chain corresponds to 1597–1605 (IEKYFVSPT). Residues 1606–1625 (LFRVIRLARIGRILRLIKGA) form a helical membrane-spanning segment. The Cytoplasmic segment spans residues 1626–1638 (KGIRTLLFALMMS). Residues 1639-1661 (LPALFNIGLLLFLVMFIYAIFGM) traverse the membrane as a helical segment. Over 1662-1684 (SNFAYVKKEAGINDMFNFETFGN) the chain is Extracellular. The pore-forming intramembrane region spans 1685 to 1697 (SMICLFQITTSAG). Topologically, residues 1698-1731 (WDGLLAPILNSAPPDCDPKKVHPGSSVEGDCGNP) are extracellular. C1713 and C1728 are disulfide-bonded. A helical transmembrane segment spans residues 1732–1757 (SVGIFYFVSYIIISFLVVVNMYIAVI). The Cytoplasmic portion of the chain corresponds to 1758–1984 (LENFSVATEE…EDKEKDESRK (227 aa)). The IQ domain maps to 1887-1916 (EEVSATIIQRAYRRYRLRQHVKNISSIYIK). Over residues 1916–1930 (KDGDRDDDLPNKEDT) the composition is skewed to basic and acidic residues. Residues 1916–1984 (KDGDRDDDLP…EDKEKDESRK (69 aa)) form a disordered region. Residues 1946–1958 (VTASTISPPSYDS) show a composition bias toward polar residues. Residues 1960–1984 (TKPDQEKYETDKTEKEDKEKDESRK) are compositionally biased toward basic and acidic residues.

It belongs to the sodium channel (TC 1.A.1.10) family. Nav1.7/SCN9A subfamily. The Nav1.7 voltage-gated sodium channel consists of an ion-conducting alpha subunit SCN9A which is functional on its own regulated by one or more beta-1 (SCN1B), beta-2 (SCN2B), beta-3 (SCN3B) and beta-4 (SCN4B) subunits. SCN1B and SCN3B are non-covalently associated with SCN9A. SCN2B and SCN4B are disulfide-linked to SCN9A. SCN1B regulates channel inactivation. Interacts with NEDD4 and NEDD4L; regulates Nav1.7 activity most probably through ubiquitination and subsequent endocytosis. Interacts with TMEM233; modulates the gating properties of NaV1.7. In terms of processing, phosphorylation at Ser-1488 by PKC in a highly conserved cytoplasmic loop increases peak sodium currents. Post-translationally, ubiquitinated by NEDD4L; which may promote its endocytosis. Does not seem to be ubiquitinated by NEDD4. Ubiquitinated by NEDD4L; which may promote its endocytosis. In terms of tissue distribution, expressed at high level in the dorsal root ganglion and at much lower levels in the brain, sciatic nerve, nodose ganglia, heart, thyroid and adrenal glands and Schwann cells, but not in the cardiac and skeletal muscles, brain and liver.

The protein localises to the cell membrane. Its subcellular location is the cell projection. It localises to the neuron projection. The protein resides in the axon. It carries out the reaction Na(+)(in) = Na(+)(out). Its activity is regulated as follows. Inhibited by the conotoxin GVIIJ. Pore-forming subunit of Nav1.7, a voltage-gated sodium (Nav) channel that directly mediates the depolarizing phase of action potentials in excitable membranes. Navs, also called VGSCs (voltage-gated sodium channels) or VDSCs (voltage-dependent sodium channels), operate by switching between closed and open conformations depending on the voltage difference across the membrane. In the open conformation they allow Na(+) ions to selectively pass through the pore, along their electrochemical gradient. The influx of Na(+) ions provokes membrane depolarization, initiating the propagation of electrical signals throughout cells and tissues. Nav1.7 plays a crucial role in controlling the excitability and action potential propagation from nociceptor neurons, thereby contributing to the sensory perception of pain. This chain is Sodium channel protein type 9 subunit alpha, found in Rattus norvegicus (Rat).